Consider the following 235-residue polypeptide: Orotidine 5'-phosphate decarboxylase (235 aa).

Residues D12, K34, 61 to 70 (DLKFHDIPNT), T121, R182, Q191, G211, and R212 each bind substrate. K63 (proton donor) is an active-site residue.

The protein belongs to the OMP decarboxylase family. Type 1 subfamily. In terms of assembly, homodimer.

It carries out the reaction orotidine 5'-phosphate + H(+) = UMP + CO2. It functions in the pathway pyrimidine metabolism; UMP biosynthesis via de novo pathway; UMP from orotate: step 2/2. In terms of biological role, catalyzes the decarboxylation of orotidine 5'-monophosphate (OMP) to uridine 5'-monophosphate (UMP). The protein is Orotidine 5'-phosphate decarboxylase of Marinomonas sp. (strain MWYL1).